We begin with the raw amino-acid sequence, 173 residues long: Bifunctional protein PyrR (173 aa).

The PRPP-binding motif lies at 93–105 (VILVDDVLYTGRT).

Belongs to the purine/pyrimidine phosphoribosyltransferase family. PyrR subfamily. Homodimer and homohexamer; in equilibrium.

It catalyses the reaction UMP + diphosphate = 5-phospho-alpha-D-ribose 1-diphosphate + uracil. In terms of biological role, regulates transcriptional attenuation of the pyrimidine nucleotide (pyr) operon by binding in a uridine-dependent manner to specific sites on pyr mRNA. This disrupts an antiterminator hairpin in the RNA and favors formation of a downstream transcription terminator, leading to a reduced expression of downstream genes. Also displays a weak uracil phosphoribosyltransferase activity which is not physiologically significant. This chain is Bifunctional protein PyrR, found in Streptococcus thermophilus (strain CNRZ 1066).